We begin with the raw amino-acid sequence, 240 residues long: Zinc finger CCCH domain-containing protein 52 (240 aa).

Disordered stretches follow at residues 1 to 37 (MDAR…GLGS) and 81 to 106 (SQVS…PGSG). A C3H1-type 1 zinc finger spans residues 36–64 (GSKSKPCTKFFSTSGCPFGDNCHFLHYVP). Positions 89 to 104 (GSGGPGGRFSGRGDPG) are enriched in gly residues. The KH domain maps to 113-177 (ASTSKISVDA…EQINVASGMV (65 aa)). The C3H1-type 2 zinc-finger motif lies at 205-232 (NYKTKICDRYSKGNCTYGDRCHFAHGES).

This Arabidopsis thaliana (Mouse-ear cress) protein is Zinc finger CCCH domain-containing protein 52.